Here is a 210-residue protein sequence, read N- to C-terminus: Na(+)-translocating NADH-quinone reductase subunit D (210 aa).

The next 6 membrane-spanning stretches (helical) occupy residues 14-34, 42-62, 72-92, 103-123, 131-151, and 178-198; these read PIVS…ALAV, LVMT…ISIL, IIVQ…VLQA, VFVG…AYAM, FMDG…VGFI, and NGLL…IWII.

The protein belongs to the NqrDE/RnfAE family. Composed of six subunits; NqrA, NqrB, NqrC, NqrD, NqrE and NqrF.

The protein localises to the cell inner membrane. It catalyses the reaction a ubiquinone + n Na(+)(in) + NADH + H(+) = a ubiquinol + n Na(+)(out) + NAD(+). Its function is as follows. NQR complex catalyzes the reduction of ubiquinone-1 to ubiquinol by two successive reactions, coupled with the transport of Na(+) ions from the cytoplasm to the periplasm. NqrA to NqrE are probably involved in the second step, the conversion of ubisemiquinone to ubiquinol. This Shewanella halifaxensis (strain HAW-EB4) protein is Na(+)-translocating NADH-quinone reductase subunit D.